We begin with the raw amino-acid sequence, 184 residues long: MSTQNSAYSAFSSLLAEAALPVSPAELHGHLLGRVCAGAGFDEAAWQHAAAELLGGAPGERLEAALSGLLGMVRQDFSAGEVAVVLLLPDDETPLAQRTEALGQWCQGFLAGFGLTAREGSLTGEAEEVLQDMAAIAQVQGQLEDSEDGETDYMEVMEYLRVAPLLLFAECGKPLEPAPKPSLH.

Belongs to the UPF0149 family.

This chain is UPF0149 protein PSPA7_5968, found in Pseudomonas paraeruginosa (strain DSM 24068 / PA7) (Pseudomonas aeruginosa (strain PA7)).